The sequence spans 215 residues: Golgi-associated RAB2 interactor protein 5A (215 aa).

2 disordered regions span residues 1–20 (MKRG…AGPG) and 174–215 (QDYS…LWGL). Positions 178–191 (ALEDDEDDDEDEDR) are enriched in acidic residues.

This sequence belongs to the GARIN family. As to quaternary structure, interacts (via N-terminus) with RAB2B (in GTP-bound form).

The protein resides in the golgi apparatus. Its function is as follows. RAB2B effector protein which promotes cytosolic DNA-induced innate immune responses. Regulates IFN responses against DNA viruses by regulating the CGAS-STING signaling axis. This chain is Golgi-associated RAB2 interactor protein 5A (GARIN5A), found in Bos taurus (Bovine).